A 175-amino-acid chain; its full sequence is NADH-quinone oxidoreductase subunit I (175 aa).

2 consecutive 4Fe-4S ferredoxin-type domains span residues 69–98 (KRDE…IEAA) and 115–144 (KKFE…LDGP). [4Fe-4S] cluster is bound by residues C78, C81, C84, C88, C124, C127, C130, and C134.

This sequence belongs to the complex I 23 kDa subunit family. As to quaternary structure, NDH-1 is composed of 14 different subunits. Subunits NuoA, H, J, K, L, M, N constitute the membrane sector of the complex. Requires [4Fe-4S] cluster as cofactor.

It localises to the cell inner membrane. The enzyme catalyses a quinone + NADH + 5 H(+)(in) = a quinol + NAD(+) + 4 H(+)(out). In terms of biological role, NDH-1 shuttles electrons from NADH, via FMN and iron-sulfur (Fe-S) centers, to quinones in the respiratory chain. The immediate electron acceptor for the enzyme in this species is believed to be ubiquinone. Couples the redox reaction to proton translocation (for every two electrons transferred, four hydrogen ions are translocated across the cytoplasmic membrane), and thus conserves the redox energy in a proton gradient. The chain is NADH-quinone oxidoreductase subunit I from Leptospira interrogans serogroup Icterohaemorrhagiae serovar Lai (strain 56601).